A 145-amino-acid polypeptide reads, in one-letter code: MSSRREGRELALQALYSSDVEVMDGTTVLKRIMENFGDGSEPAVDAHSRSFSFAAELVNGVVANRAAIDQRIEEKSKNWSISRMARVDLNILRLAVFELFYRPDIPKNVTINEAIEVAKKFGADDSPAFINGILDEIASLLPDKE.

It belongs to the NusB family.

Its function is as follows. Involved in transcription antitermination. Required for transcription of ribosomal RNA (rRNA) genes. Binds specifically to the boxA antiterminator sequence of the ribosomal RNA (rrn) operons. The sequence is that of Transcription antitermination protein NusB from Geotalea uraniireducens (strain Rf4) (Geobacter uraniireducens).